The primary structure comprises 384 residues: Anhydro-N-acetylmuramic acid kinase (384 aa).

9–16 (GTSYDAID) provides a ligand contact to ATP.

Belongs to the anhydro-N-acetylmuramic acid kinase family.

The catalysed reaction is 1,6-anhydro-N-acetyl-beta-muramate + ATP + H2O = N-acetyl-D-muramate 6-phosphate + ADP + H(+). It participates in amino-sugar metabolism; 1,6-anhydro-N-acetylmuramate degradation. The protein operates within cell wall biogenesis; peptidoglycan recycling. Catalyzes the specific phosphorylation of 1,6-anhydro-N-acetylmuramic acid (anhMurNAc) with the simultaneous cleavage of the 1,6-anhydro ring, generating MurNAc-6-P. Is required for the utilization of anhMurNAc either imported from the medium or derived from its own cell wall murein, and thus plays a role in cell wall recycling. This chain is Anhydro-N-acetylmuramic acid kinase, found in Streptomyces avermitilis (strain ATCC 31267 / DSM 46492 / JCM 5070 / NBRC 14893 / NCIMB 12804 / NRRL 8165 / MA-4680).